Reading from the N-terminus, the 314-residue chain is 4-hydroxy-3-methylbut-2-enyl diphosphate reductase (314 aa).

C12 provides a ligand contact to [4Fe-4S] cluster. The (2E)-4-hydroxy-3-methylbut-2-enyl diphosphate site is built by H43 and H81. Residues H43 and H81 each coordinate dimethylallyl diphosphate. Residues H43 and H81 each contribute to the isopentenyl diphosphate site. Position 103 (C103) interacts with [4Fe-4S] cluster. H131 provides a ligand contact to (2E)-4-hydroxy-3-methylbut-2-enyl diphosphate. H131 contacts dimethylallyl diphosphate. H131 contacts isopentenyl diphosphate. E133 acts as the Proton donor in catalysis. T170 serves as a coordination point for (2E)-4-hydroxy-3-methylbut-2-enyl diphosphate. C198 is a [4Fe-4S] cluster binding site. Positions 226, 228, and 271 each coordinate (2E)-4-hydroxy-3-methylbut-2-enyl diphosphate. 3 residues coordinate dimethylallyl diphosphate: S226, N228, and S271. Positions 226, 228, and 271 each coordinate isopentenyl diphosphate.

Belongs to the IspH family. [4Fe-4S] cluster serves as cofactor.

It carries out the reaction isopentenyl diphosphate + 2 oxidized [2Fe-2S]-[ferredoxin] + H2O = (2E)-4-hydroxy-3-methylbut-2-enyl diphosphate + 2 reduced [2Fe-2S]-[ferredoxin] + 2 H(+). It catalyses the reaction dimethylallyl diphosphate + 2 oxidized [2Fe-2S]-[ferredoxin] + H2O = (2E)-4-hydroxy-3-methylbut-2-enyl diphosphate + 2 reduced [2Fe-2S]-[ferredoxin] + 2 H(+). Its pathway is isoprenoid biosynthesis; dimethylallyl diphosphate biosynthesis; dimethylallyl diphosphate from (2E)-4-hydroxy-3-methylbutenyl diphosphate: step 1/1. It participates in isoprenoid biosynthesis; isopentenyl diphosphate biosynthesis via DXP pathway; isopentenyl diphosphate from 1-deoxy-D-xylulose 5-phosphate: step 6/6. Functionally, catalyzes the conversion of 1-hydroxy-2-methyl-2-(E)-butenyl 4-diphosphate (HMBPP) into a mixture of isopentenyl diphosphate (IPP) and dimethylallyl diphosphate (DMAPP). Acts in the terminal step of the DOXP/MEP pathway for isoprenoid precursor biosynthesis. This chain is 4-hydroxy-3-methylbut-2-enyl diphosphate reductase, found in Halalkalibacterium halodurans (strain ATCC BAA-125 / DSM 18197 / FERM 7344 / JCM 9153 / C-125) (Bacillus halodurans).